Reading from the N-terminus, the 146-residue chain is Negative cofactor 2 complex subunit beta (146 aa).

Residues 124–146 (FRQSRSRLHHNSVSDPVKSEDSS) form a disordered region. Phosphoserine occurs at positions 135, 137, and 142.

Component of the NC2 (negative cofactor 2) complex composed of BUR6 and NCB2. The NC2 complex associates with SPT15/TBP. Interacts with SPT15/TBP.

It localises to the nucleus. Its function is as follows. Component of the NC2 complex which represses RNA polymerase II transcription through binding to SPT15/TBP and thereby inhibiting the assembly of the preinitiation complex. The NC2 complex may also mediate transcriptional activation from TATA-driven promoters through association with SPT15/TBP. This Saccharomyces cerevisiae (strain ATCC 204508 / S288c) (Baker's yeast) protein is Negative cofactor 2 complex subunit beta (NCB2).